The primary structure comprises 180 residues: Signal peptidase complex subunit 2 (180 aa).

The Cytoplasmic segment spans residues 1 to 45 (MSDERITVVNKWDGPTVKNGLDEVVKKILNDKVGWTEQHNLMNLR). Residues 46 to 66 (LLISFIGVAFSAFACGYDFYA) traverse the membrane as a helical segment. The Lumenal portion of the chain corresponds to 67–72 (PFPKSK). Residues 73–93 (IVLLVCSVSYFICMGVLQLFQ) form a helical membrane-spanning segment. Topologically, residues 94 to 180 (WYVEKDCFYE…LWARLIRSEQ (87 aa)) are cytoplasmic.

Belongs to the SPCS2 family. In terms of assembly, component of the signal peptidase complex (SPC) composed of a catalytic subunit sec-11 and three accessory subunits spcs-1, spcs-2 and spcs-3. The complex induces a local thinning of the ER membrane which is used to measure the length of the signal peptide (SP) h-region of protein substrates. This ensures the selectivity of the complex towards h-regions shorter than 18-20 amino acids.

It is found in the endoplasmic reticulum membrane. Functionally, component of the signal peptidase complex (SPC) which catalyzes the cleavage of N-terminal signal sequences from nascent proteins as they are translocated into the lumen of the endoplasmic reticulum. Enhances the enzymatic activity of SPC and facilitates the interactions between different components of the translocation site. The protein is Signal peptidase complex subunit 2 of Caenorhabditis briggsae.